The chain runs to 75 residues: MAFLNKSLLLVLFLGLVSLSICEEERRENEDEEEQEDDEQSEMRRSLLSTLGNMAKAAGRAALNAITGLVNQGEQ.

An N-terminal signal peptide occupies residues 1–22 (MAFLNKSLLLVLFLGLVSLSIC). The propeptide occupies 23–43 (EEERRENEDEEEQEDDEQSEM). The segment at 24–44 (EERRENEDEEEQEDDEQSEMR) is disordered. The segment covering 30-40 (EDEEEQEDDEQ) has biased composition (acidic residues). Glutamine amide is present on Gln-72. Residues 74-75 (EQ) constitute a propeptide that is removed on maturation.

In terms of tissue distribution, expressed by the skin glands.

It is found in the secreted. Has antibacterial activity against Gram-positive bacterium M.luteus NCT C2665 but not against Gram-negative bacterium E.coli K12D31. This chain is Dermaseptin-related peptide, found in Agalychnis callidryas (Red-eyed tree frog).